Consider the following 80-residue polypeptide: UPF0248 protein YG5714_2801 (80 aa).

Belongs to the UPF0248 family.

The chain is UPF0248 protein YG5714_2801 from Saccharolobus islandicus (strain Y.G.57.14 / Yellowstone #1) (Sulfolobus islandicus).